Here is a 641-residue protein sequence, read N- to C-terminus: 1-deoxy-D-xylulose-5-phosphate synthase (641 aa).

Thiamine diphosphate-binding positions include histidine 80 and 121–123 (GHS). Aspartate 152 provides a ligand contact to Mg(2+). Residues 153-154 (GS), asparagine 181, tyrosine 290, and glutamate 372 contribute to the thiamine diphosphate site. Asparagine 181 is a binding site for Mg(2+).

The protein belongs to the transketolase family. DXPS subfamily. As to quaternary structure, homodimer. Requires Mg(2+) as cofactor. Thiamine diphosphate is required as a cofactor.

The enzyme catalyses D-glyceraldehyde 3-phosphate + pyruvate + H(+) = 1-deoxy-D-xylulose 5-phosphate + CO2. It participates in metabolic intermediate biosynthesis; 1-deoxy-D-xylulose 5-phosphate biosynthesis; 1-deoxy-D-xylulose 5-phosphate from D-glyceraldehyde 3-phosphate and pyruvate: step 1/1. Functionally, catalyzes the acyloin condensation reaction between C atoms 2 and 3 of pyruvate and glyceraldehyde 3-phosphate to yield 1-deoxy-D-xylulose-5-phosphate (DXP). The protein is 1-deoxy-D-xylulose-5-phosphate synthase of Rhodobacter capsulatus (Rhodopseudomonas capsulata).